We begin with the raw amino-acid sequence, 294 residues long: Picrinine-N-methytransferase TMT2 (294 aa).

The segment at 75–84 (LLDVGCGLGG) is SAM motif I. Residues 137-143 (DGEFDVV) carry the Vacuolar targeting signal motif. Residues 138–146 (GEFDVVFTL) are SAM motif II. The segment at 165 to 174 (VGSPGAAIVV) is SAM motif III.

It belongs to the class I-like SAM-binding methyltransferase superfamily. gTMT family. Homodimer.

The protein resides in the vacuole membrane. The catalysed reaction is picrinine + S-adenosyl-L-methionine = ervincine + S-adenosyl-L-homocysteine + H(+). Its pathway is alkaloid biosynthesis; vindoline biosynthesis. In terms of biological role, S-adenosyl-L-methionine-dependent N-methyltransferase involved in the biosynthesis of biologically active monoterpenoid indole alkaloids (MIAs) natural products including vindoline. Catalyzes the conversion of picrinine to N-methylpicrinine (ervincine). The polypeptide is Picrinine-N-methytransferase TMT2 (Catharanthus roseus (Madagascar periwinkle)).